Reading from the N-terminus, the 394-residue chain is Ceramide glucosyltransferase-B (394 aa).

Topologically, residues 1–10 (MAVLDLALQG) are lumenal. Residues 11–32 (LAIFGCILFFVLWFMHFLSIVY) form a helical membrane-spanning segment. Topologically, residues 33–195 (TRLHLNKKVS…QVYFGTSHPR (163 aa)) are cytoplasmic. Asp92 is a short sequence motif (D1). Position 144 (Asp144) is a short sequence motif, D2. Residues 196-215 (SYISANVTGIKCVTGMSCLM) traverse the membrane as a helical segment. The Lumenal portion of the chain corresponds to 216–287 (RKEVLDQAGG…KLRINMLPAT (72 aa)). Residue Asp236 is a short sequence motif, D3. Catalysis depends on Asp236, which acts as the Proton acceptor. The (Q/R)XXRW motif lies at 272–276 (RMIRW). Residues 288–304 (IICEPISECFVASLIIG) traverse the membrane as a helical segment. Residues 305-309 (WAAHH) lie on the Cytoplasmic side of the membrane. The helical transmembrane segment at 310-328 (IFRWDIMVFFMCHCLAWFI) threads the bilayer. The Lumenal segment spans residues 329–348 (FDYIQLRGVQGGPLNFSKLD). Residues 349–369 (YAVAWFIRESMTIYIFLSALW) traverse the membrane as a helical segment. Topologically, residues 370-394 (DPTISWRTGRYRLRCGGTAEEILDV) are cytoplasmic.

The protein belongs to the glycosyltransferase 2 family.

The protein resides in the golgi apparatus membrane. It carries out the reaction an N-acylsphing-4-enine + UDP-alpha-D-glucose = a beta-D-glucosyl-(1&lt;-&gt;1')-N-acylsphing-4-enine + UDP + H(+). The catalysed reaction is UDP-alpha-D-xylose + an N-acylsphing-4-enine = a beta-D-xylosyl-(1&lt;-&gt;1')-N-acylsphing-4-enine + UDP + H(+). It catalyses the reaction N-(9Z-octadecenoyl)-sphing-4-enine + UDP-alpha-D-xylose = beta-D-xylosyl-(1&lt;-&gt;1')-N-(9Z-octadecenoyl)-sphing-4-enine + UDP + H(+). Its pathway is lipid metabolism; sphingolipid metabolism. Participates in the initial step of the glucosylceramide-based glycosphingolipid/GSL synthetic pathway at the cytosolic surface of the Golgi. Catalyzes the transfer of glucose from UDP-glucose to ceramide to produce glucosylceramide/GlcCer (such as beta-D-glucosyl-(1&lt;-&gt;1')-N-acylsphing-4-enine). Glucosylceramide is the core component of glycosphingolipids/GSLs, amphipathic molecules consisting of a ceramide lipid moiety embedded in the outer leaflet of the membrane, linked to one of hundreds of different externally oriented oligosaccharide structures. Glycosphingolipids are essential components of membrane microdomains that mediate membrane trafficking and signal transduction. They are implicated in many fundamental cellular processes, including growth, differentiation, migration, morphogenesis, cell-to-cell and cell-to-matrix interactions. Catalyzes the synthesis of xylosylceramide/XylCer (such as beta-D-xylosyl-(1&lt;-&gt;1')-N-acylsphing-4-enine) using UDP-Xyl as xylose donor. The chain is Ceramide glucosyltransferase-B (ugcg-b) from Xenopus laevis (African clawed frog).